The sequence spans 501 residues: Lysine--tRNA ligase (501 aa).

Glu411 and Glu418 together coordinate Mg(2+).

Belongs to the class-II aminoacyl-tRNA synthetase family. As to quaternary structure, homodimer. It depends on Mg(2+) as a cofactor.

It is found in the cytoplasm. It catalyses the reaction tRNA(Lys) + L-lysine + ATP = L-lysyl-tRNA(Lys) + AMP + diphosphate. This Aliivibrio salmonicida (strain LFI1238) (Vibrio salmonicida (strain LFI1238)) protein is Lysine--tRNA ligase.